The chain runs to 290 residues: AA9 family lytic polysaccharide monooxygenase A (290 aa).

Residues Met-1–Ala-17 form the signal peptide. Cu(2+)-binding residues include His-18 and His-101. An intrachain disulfide couples Cys-67 to Cys-189. His-176 contributes to the O2 binding site. Position 187 (Tyr-187) interacts with Cu(2+). Residues Asn-220 and Asn-254 are each glycosylated (N-linked (GlcNAc...) asparagine). Positions Gly-240–Pro-290 are disordered. Residues Gly-245–Thr-275 show a composition bias toward low complexity. Residues Tyr-280–Pro-290 are compositionally biased toward basic residues.

Belongs to the polysaccharide monooxygenase AA9 family. It depends on Cu(2+) as a cofactor.

The protein resides in the secreted. The catalysed reaction is [(1-&gt;4)-beta-D-glucosyl]n+m + reduced acceptor + O2 = 4-dehydro-beta-D-glucosyl-[(1-&gt;4)-beta-D-glucosyl]n-1 + [(1-&gt;4)-beta-D-glucosyl]m + acceptor + H2O.. In terms of biological role, lytic polysaccharide monooxygenase (LPMO) that depolymerizes crystalline and amorphous polysaccharides via the oxidation of scissile alpha- or beta-(1-4)-glycosidic bonds, yielding exclusively C1 oxidation products. Catalysis by LPMOs requires the reduction of the active-site copper from Cu(II) to Cu(I) by a reducing agent and H(2)O(2) or O(2) as a cosubstrate. The polypeptide is AA9 family lytic polysaccharide monooxygenase A (Aspergillus fumigatus (strain ATCC MYA-4609 / CBS 101355 / FGSC A1100 / Af293) (Neosartorya fumigata)).